The chain runs to 675 residues: Cysteine-rich receptor-like protein kinase 25 (675 aa).

The signal sequence occupies residues 1 to 25; sequence MSSCFKSSVSLFSVFLFMILKTVTS. Residues 26-281 lie on the Extracellular side of the membrane; it reads DPTYLYHICP…IPSEKGKGKN (256 aa). Gnk2-homologous domains are found at residues 28-134 and 140-247; these read TYLY…NQSI and IRPG…LYPF. N-linked (GlcNAc...) asparagine glycosylation is found at Asn-36, Asn-43, Asn-77, Asn-106, Asn-131, Asn-151, Asn-161, Asn-188, Asn-249, and Asn-281. Residues 282–302 traverse the membrane as a helical segment; that stretch reads LTVIVTAIAVPVSVCVLLLGA. The Cytoplasmic segment spans residues 303-675; that stretch reads MCWLLARRRN…DSSITIVYPR (373 aa). One can recognise a Protein kinase domain in the interval 347–622; sequence FSESNKLGHG…DILVMMNSFT (276 aa). ATP contacts are provided by residues 353–361 and Lys-375; that span reads LGHGGFGEV. Tyr-420 carries the phosphotyrosine modification. The Proton acceptor role is filled by Asp-472. Ser-476 is subject to Phosphoserine. Thr-512 carries the post-translational modification Phosphothreonine. Tyr-520 carries the phosphotyrosine modification. The disordered stretch occupies residues 638-661; it reads MKDSRDPRSGGSASDHSATSKSLP. The span at 648 to 661 shows a compositional bias: polar residues; the sequence is GSASDHSATSKSLP.

It belongs to the protein kinase superfamily. Ser/Thr protein kinase family. CRK subfamily.

The protein resides in the membrane. It catalyses the reaction L-seryl-[protein] + ATP = O-phospho-L-seryl-[protein] + ADP + H(+). The catalysed reaction is L-threonyl-[protein] + ATP = O-phospho-L-threonyl-[protein] + ADP + H(+). This chain is Cysteine-rich receptor-like protein kinase 25 (CRK25), found in Arabidopsis thaliana (Mouse-ear cress).